Consider the following 108-residue polypeptide: Nucleoid-associated protein mma_2329 (108 aa).

It belongs to the YbaB/EbfC family. Homodimer.

It localises to the cytoplasm. Its subcellular location is the nucleoid. Binds to DNA and alters its conformation. May be involved in regulation of gene expression, nucleoid organization and DNA protection. This chain is Nucleoid-associated protein mma_2329, found in Janthinobacterium sp. (strain Marseille) (Minibacterium massiliensis).